The following is a 414-amino-acid chain: Cytochrome P450 CYP105Q4 (414 aa).

The span at 1–12 (MSDTLASPSPET) shows a compositional bias: polar residues. The interval 1–21 (MSDTLASPSPETASGIPDYPM) is disordered. Heme contacts are provided by H108, Q302, R304, H361, and C363.

It belongs to the cytochrome P450 family. Heme serves as cofactor.

Can bind oleic-acid derivatives, amphotericin B like precursors and a variety of nitrogen ligand donors. This chain is Cytochrome P450 CYP105Q4, found in Mycobacterium marinum (strain ATCC BAA-535 / M).